A 940-amino-acid polypeptide reads, in one-letter code: Valine--tRNA ligase (940 aa).

Residues 47–57 carry the 'HIGH' region motif; the sequence is PNVTGVLHMGH. The 'KMSKS' region motif lies at 564 to 568; that stretch reads KLSKS. Lysine 567 contributes to the ATP binding site. Positions 873 to 905 form a coiled coil; sequence EEHLLKEKGRLEKERVRLERAVENLERLLGDES.

The protein belongs to the class-I aminoacyl-tRNA synthetase family. ValS type 1 subfamily. In terms of assembly, monomer.

It is found in the cytoplasm. It catalyses the reaction tRNA(Val) + L-valine + ATP = L-valyl-tRNA(Val) + AMP + diphosphate. Functionally, catalyzes the attachment of valine to tRNA(Val). As ValRS can inadvertently accommodate and process structurally similar amino acids such as threonine, to avoid such errors, it has a 'posttransfer' editing activity that hydrolyzes mischarged Thr-tRNA(Val) in a tRNA-dependent manner. This chain is Valine--tRNA ligase, found in Chlamydia pneumoniae (Chlamydophila pneumoniae).